The following is a 542-amino-acid chain: CTP synthase (542 aa).

The amidoligase domain stretch occupies residues 1–265 (MARYVFITGG…DSEVLSAFGI (265 aa)). Position 13 (Ser-13) interacts with CTP. A UTP-binding site is contributed by Ser-13. Position 14 to 19 (14 to 19 (SLGKGI)) interacts with ATP. L-glutamine is bound at residue Tyr-54. Asp-71 is an ATP binding site. Mg(2+) is bound by residues Asp-71 and Glu-139. CTP-binding positions include 146-148 (DIE), 186-191 (KTKPTQ), and Lys-222. UTP contacts are provided by residues 186–191 (KTKPTQ) and Lys-222. The Glutamine amidotransferase type-1 domain occupies 291–541 (TIAVVGKYTG…IEAAIEQSRL (251 aa)). Gly-353 serves as a coordination point for L-glutamine. Cys-380 (nucleophile; for glutamine hydrolysis) is an active-site residue. Residues 381–384 (FGMQ), Glu-404, and Arg-469 contribute to the L-glutamine site. Active-site residues include His-514 and Glu-516.

Belongs to the CTP synthase family. Homotetramer.

The catalysed reaction is UTP + L-glutamine + ATP + H2O = CTP + L-glutamate + ADP + phosphate + 2 H(+). It catalyses the reaction L-glutamine + H2O = L-glutamate + NH4(+). The enzyme catalyses UTP + NH4(+) + ATP = CTP + ADP + phosphate + 2 H(+). It participates in pyrimidine metabolism; CTP biosynthesis via de novo pathway; CTP from UDP: step 2/2. With respect to regulation, allosterically activated by GTP, when glutamine is the substrate; GTP has no effect on the reaction when ammonia is the substrate. The allosteric effector GTP functions by stabilizing the protein conformation that binds the tetrahedral intermediate(s) formed during glutamine hydrolysis. Inhibited by the product CTP, via allosteric rather than competitive inhibition. Catalyzes the ATP-dependent amination of UTP to CTP with either L-glutamine or ammonia as the source of nitrogen. Regulates intracellular CTP levels through interactions with the four ribonucleotide triphosphates. The chain is CTP synthase from Brucella melitensis biotype 1 (strain ATCC 23456 / CCUG 17765 / NCTC 10094 / 16M).